A 533-amino-acid chain; its full sequence is Bifunctional aspartate aminotransferase and L-aspartate beta-decarboxylase (533 aa).

Residues Gly-115 and Asn-256 each contribute to the L-aspartate site. Lys-315 carries the N6-(pyridoxal phosphate)lysine modification. Arg-497 lines the L-aspartate pocket.

It belongs to the class-I pyridoxal-phosphate-dependent aminotransferase family. As to quaternary structure, homododecamer. Pyridoxal 5'-phosphate is required as a cofactor.

It carries out the reaction L-aspartate + H(+) = L-alanine + CO2. It catalyses the reaction L-aspartate + 2-oxoglutarate = oxaloacetate + L-glutamate. Its function is as follows. Bifunctional enzyme that has both L-aspartate decarboxylase and transaminase activity. This is Bifunctional aspartate aminotransferase and L-aspartate beta-decarboxylase from Comamonas testosteroni (Pseudomonas testosteroni).